A 481-amino-acid chain; its full sequence is Glucokinase-1 (481 aa).

Positions 4 to 477 (PKLTKAVDSI…SGVGAALCAL (474 aa)) constitute a Hexokinase domain. Positions 64–204 (SGQEHGVTML…LSNVHVVALT (141 aa)) are hexokinase small subdomain. An ATP-binding site is contributed by Lys101. The interval 146–172 (KMGFTFSYPVDQTSLSSGKLIRWTKGF) is glucose-binding. Residues 205-466 (NDTTGTLLAR…RDVHLRISKD (262 aa)) form a hexokinase large subdomain region. 466 to 471 (DGSGVG) is an ATP binding site.

The protein belongs to the hexokinase family.

The catalysed reaction is D-glucose + ATP = D-glucose 6-phosphate + ADP + H(+). The enzyme catalyses a D-hexose + ATP = a D-hexose 6-phosphate + ADP + H(+). It catalyses the reaction D-mannose + ATP = D-mannose 6-phosphate + ADP + H(+). The protein operates within carbohydrate metabolism; hexose metabolism. Its pathway is carbohydrate degradation; glycolysis; D-glyceraldehyde 3-phosphate and glycerone phosphate from D-glucose: step 1/4. Its function is as follows. Glukokinase specific for aldohexoses. Phosphorylates glucose and mannose, but not fructose. This Kluyveromyces lactis (strain ATCC 8585 / CBS 2359 / DSM 70799 / NBRC 1267 / NRRL Y-1140 / WM37) (Yeast) protein is Glucokinase-1 (GLK1).